A 685-amino-acid chain; its full sequence is ATP-dependent RNA helicase MSS116, mitochondrial (685 aa).

The transit peptide at 1–34 directs the protein to the mitochondrion; it reads MLVLQRIPKRALQFNGVTGTVCSTRLFHHAFNLN. The segment at 42–107 is disordered; that stretch reads SEERRYRNSN…NNGSRRRYQD (66 aa). Residues 58–69 show a composition bias toward low complexity; that stretch reads SDSNSNNKYRNS. Residues 70–86 show a composition bias toward basic and acidic residues; sequence SYDDNRSRSNYGGDKRN. Positions 88–99 are enriched in low complexity; the sequence is RNNNNYGNNRNN. Positions 138–166 match the Q motif motif; that stretch reads SLLEESLLDANVHKAISAMKFESLTPVQQ. A Helicase ATP-binding domain is found at 170–357; sequence KPILTTENDV…ATIMNKKDCL (188 aa). 183 to 190 serves as a coordination point for ATP; sequence AKTGTGKT. The DEAD box motif lies at 298-301; that stretch reads DEAD. The Helicase C-terminal domain occupies 386-542; it reads SMVALIQSIE…EDYLNQDKEN (157 aa). The segment at 633–685 is disordered; sequence DREFDDEDRYTSRSQNNYKSKQSSKSNRFEGRNDYSNSRRSHANQKRNFTFDD. Low complexity predominate over residues 644-658; sequence SRSQNNYKSKQSSKS.

It belongs to the DEAD box helicase family. DDX18/HAS1 subfamily.

It localises to the mitochondrion matrix. It catalyses the reaction ATP + H2O = ADP + phosphate + H(+). ATP-dependent RNA helicase required for mitochondrial splicing of group I and II introns. Also required for efficient mitochondrial translation. This chain is ATP-dependent RNA helicase MSS116, mitochondrial (MSS116), found in Kluyveromyces lactis (strain ATCC 8585 / CBS 2359 / DSM 70799 / NBRC 1267 / NRRL Y-1140 / WM37) (Yeast).